The sequence spans 217 residues: Adenylate kinase (217 aa).

10–15 (GAGKGT) is an ATP binding site. Positions 30 to 59 (STGDIFRKNISDKTPLGIEAKEYLDKGQLV) are NMP. AMP contacts are provided by residues Thr31, Arg36, 57-59 (QLV), 85-88 (GFPR), and Gln92. The tract at residues 126-163 (GRRICPSCGASYHVKFNPPKLKDKCDICNNDIIQRKDD) is LID. Arg127 provides a ligand contact to ATP. Residues Cys130 and Cys133 each coordinate Zn(2+). 136-137 (SY) lines the ATP pocket. Residues Cys150 and Cys153 each contribute to the Zn(2+) site. AMP contacts are provided by Arg160 and Arg171. Position 199 (Gly199) interacts with ATP.

It belongs to the adenylate kinase family. As to quaternary structure, monomer.

Its subcellular location is the cytoplasm. The catalysed reaction is AMP + ATP = 2 ADP. Its pathway is purine metabolism; AMP biosynthesis via salvage pathway; AMP from ADP: step 1/1. Functionally, catalyzes the reversible transfer of the terminal phosphate group between ATP and AMP. Plays an important role in cellular energy homeostasis and in adenine nucleotide metabolism. This is Adenylate kinase from Clostridium kluyveri (strain NBRC 12016).